The chain runs to 395 residues: D-alanine--D-alanine ligase (395 aa).

Residues 172–391 enclose the ATP-grasp domain; that stretch reads KVVLGAAGIP…YTELITRLIE (220 aa). 204 to 266 is an ATP binding site; the sequence is DAGLTYPLFI…EQGIDGREIE (63 aa). Asp-345, Glu-358, and Asn-360 together coordinate Mg(2+).

Belongs to the D-alanine--D-alanine ligase family. It depends on Mg(2+) as a cofactor. Mn(2+) serves as cofactor.

It is found in the cytoplasm. It catalyses the reaction 2 D-alanine + ATP = D-alanyl-D-alanine + ADP + phosphate + H(+). It functions in the pathway cell wall biogenesis; peptidoglycan biosynthesis. Its function is as follows. Cell wall formation. The polypeptide is D-alanine--D-alanine ligase (Bifidobacterium longum subsp. infantis (strain ATCC 15697 / DSM 20088 / JCM 1222 / NCTC 11817 / S12)).